We begin with the raw amino-acid sequence, 384 residues long: V-type proton ATPase subunit C 2 (384 aa).

This sequence belongs to the V-ATPase C subunit family. V-ATPase is a heteromultimeric enzyme made up of two complexes: the ATP-hydrolytic V1 complex and the proton translocation V0 complex. The V1 complex consists of three catalytic AB heterodimers that form a heterohexamer, three peripheral stalks each consisting of EG heterodimers, one central rotor including subunits D and F, and the regulatory subunits C and H. The proton translocation complex V0 consists of the proton transport subunit a, a ring of proteolipid subunits c9c'', rotary subunit d, subunits e and f, and the accessory subunits vah-19/Ac45 and vah-20/PRR.

Functionally, subunit of the V1 complex of vacuolar(H+)-ATPase (V-ATPase), a multisubunit enzyme composed of a peripheral complex (V1) that hydrolyzes ATP and a membrane integral complex (V0) that translocates protons. V-ATPase is responsible for acidifying and maintaining the pH of intracellular compartments and in some cell types, is targeted to the plasma membrane, where it is responsible for acidifying the extracellular environment. Subunit C is necessary for the assembly of the catalytic sector of the enzyme and is likely to have a specific function in its catalytic activity. The sequence is that of V-type proton ATPase subunit C 2 (VATC) from Ascidia sydneiensis samea (Vanadium-rich ascidian).